The following is a 158-amino-acid chain: Large ribosomal subunit protein mL50 (158 aa).

Belongs to the mitochondrion-specific ribosomal protein mL50 family. In terms of assembly, component of the mitochondrial large ribosomal subunit (mt-LSU). Mature mammalian 55S mitochondrial ribosomes consist of a small (28S) and a large (39S) subunit. The 28S small subunit contains a 12S ribosomal RNA (12S mt-rRNA) and 30 different proteins. The 39S large subunit contains a 16S rRNA (16S mt-rRNA), a copy of mitochondrial valine transfer RNA (mt-tRNA(Val)), which plays an integral structural role, and 52 different proteins.

It localises to the mitochondrion. The sequence is that of Large ribosomal subunit protein mL50 (MRPL50) from Homo sapiens (Human).